A 599-amino-acid polypeptide reads, in one-letter code: Elongation factor 4 (599 aa).

The region spanning 5–187 is the tr-type G domain; that stretch reads SHIRNFSIIA…RLVQSIPAPE (183 aa). GTP-binding positions include 17-22 and 134-137; these read DHGKST and NKMD.

Belongs to the TRAFAC class translation factor GTPase superfamily. Classic translation factor GTPase family. LepA subfamily.

Its subcellular location is the cell inner membrane. It catalyses the reaction GTP + H2O = GDP + phosphate + H(+). In terms of biological role, required for accurate and efficient protein synthesis under certain stress conditions. May act as a fidelity factor of the translation reaction, by catalyzing a one-codon backward translocation of tRNAs on improperly translocated ribosomes. Back-translocation proceeds from a post-translocation (POST) complex to a pre-translocation (PRE) complex, thus giving elongation factor G a second chance to translocate the tRNAs correctly. Binds to ribosomes in a GTP-dependent manner. This Pseudomonas entomophila (strain L48) protein is Elongation factor 4.